A 211-amino-acid chain; its full sequence is Ribosomal RNA small subunit methyltransferase G (211 aa).

S-adenosyl-L-methionine is bound by residues G76, L81, 127-128 (VE), and R142.

The protein belongs to the methyltransferase superfamily. RNA methyltransferase RsmG family.

Its subcellular location is the cytoplasm. The catalysed reaction is guanosine(527) in 16S rRNA + S-adenosyl-L-methionine = N(7)-methylguanosine(527) in 16S rRNA + S-adenosyl-L-homocysteine. Functionally, specifically methylates the N7 position of guanine in position 527 of 16S rRNA. This chain is Ribosomal RNA small subunit methyltransferase G, found in Vibrio vulnificus (strain CMCP6).